The following is a 98-amino-acid chain: Large ribosomal subunit protein uL23 (98 aa).

Belongs to the universal ribosomal protein uL23 family. Part of the 50S ribosomal subunit. Contacts protein L29, and trigger factor when it is bound to the ribosome.

One of the early assembly proteins it binds 23S rRNA. One of the proteins that surrounds the polypeptide exit tunnel on the outside of the ribosome. Forms the main docking site for trigger factor binding to the ribosome. The polypeptide is Large ribosomal subunit protein uL23 (Bordetella avium (strain 197N)).